The sequence spans 314 residues: uncharacterized protein (314 aa).

An N-terminal signal peptide occupies residues 1 to 18 (MKVSLLIFLIILVGVIKS). 6 N-linked (GlcNAc...) asparagine glycosylation sites follow: N43, N96, N109, N116, N117, and N161. A disordered region spans residues 252–314 (SMRITKNNPH…PKSIDFHHLF (63 aa)). Composition is skewed to low complexity over residues 257–268 (KNNPHLNNNNNN) and 285–296 (KTTTKTSTKTTS).

It is found in the secreted. This is an uncharacterized protein from Dictyostelium discoideum (Social amoeba).